A 531-amino-acid polypeptide reads, in one-letter code: Polyamine transporter PUT1 (531 aa).

Residues 1-76 (MADTGGRPEV…LPDGDAGGPM (76 aa)) form a disordered region. A compositionally biased stretch (low complexity) spans 17 to 33 (SPGHPAASTTAAAAADL). A compositionally biased stretch (basic and acidic residues) spans 34–44 (GHADTGQEKPT). A run of 12 helical transmembrane segments spans residues 83–103 (VSMI…PFGI), 113–133 (LLAI…EALI), 147–167 (YVVW…GWMK), 193–213 (LGGG…LTLL), 224–244 (VAIC…LIAL), 262–284 (WNLY…TLAG), 296–316 (ALFY…LAGT), 341–361 (AWLM…MFVA), 391–411 (TPLA…MMSF), 414–434 (IVAA…VAFI), 453–473 (TAGC…VLAL), and 476–496 (LKVA…QPAL).

The protein belongs to the amino acid-polyamine-organocation (APC) superfamily. Polyamine:cation symporter (PHS) (TC 2.A.3.12) family. Expressed in seedling roots, leaves, stems, flowers and siliques.

The protein localises to the cell membrane. Functionally, cell membrane polyamine/proton symporter involved in the polyamine uptake in cells. Possesses high affinity for spermidine and lower affinity for spermine and putrescine. Transports paraquat, a polyamine analog, and thus confers sensitivity to this chemical which is used as a herbicide. The protein is Polyamine transporter PUT1 (PUT1) of Oryza sativa subsp. japonica (Rice).